A 200-amino-acid chain; its full sequence is NADH-quinone oxidoreductase subunit C (200 aa).

This sequence belongs to the complex I 30 kDa subunit family. NDH-1 is composed of 14 different subunits. Subunits NuoB, C, D, E, F, and G constitute the peripheral sector of the complex.

Its subcellular location is the cell inner membrane. It carries out the reaction a quinone + NADH + 5 H(+)(in) = a quinol + NAD(+) + 4 H(+)(out). Functionally, NDH-1 shuttles electrons from NADH, via FMN and iron-sulfur (Fe-S) centers, to quinones in the respiratory chain. The immediate electron acceptor for the enzyme in this species is believed to be ubiquinone. Couples the redox reaction to proton translocation (for every two electrons transferred, four hydrogen ions are translocated across the cytoplasmic membrane), and thus conserves the redox energy in a proton gradient. This Rhizobium etli (strain ATCC 51251 / DSM 11541 / JCM 21823 / NBRC 15573 / CFN 42) protein is NADH-quinone oxidoreductase subunit C.